We begin with the raw amino-acid sequence, 96 residues long: Class I hydrophobin 3 (96 aa).

A signal peptide spans 1 to 18 (MQFAKIASVLAMAAAAVA). 4 disulfide bridges follow: C43/C72, C51/C66, C52/C57, and C73/C92.

Belongs to the fungal hydrophobin family.

The protein localises to the secreted. It is found in the cell wall. Functionally, aerial growth, conidiation, and dispersal of filamentous fungi in the environment rely upon a capability of their secreting small amphipathic proteins called hydrophobins (HPBs) with low sequence identity. Class I can self-assemble into an outermost layer of rodlet bundles on aerial cell surfaces, conferring cellular hydrophobicity that supports fungal growth, development and dispersal; whereas Class II form highly ordered films at water-air interfaces through intermolecular interactions but contribute nothing to the rodlet structure. Does not seem to be important for the ability to cause seedling disease. This Gibberella moniliformis (Maize ear and stalk rot fungus) protein is Class I hydrophobin 3.